We begin with the raw amino-acid sequence, 379 residues long: L-lactate dehydrogenase (379 aa).

Residues 1–379 enclose the FMN hydroxy acid dehydrogenase domain; that stretch reads MIISASTDYR…IGRDSLVNLP (379 aa). Y24 is a binding site for substrate. Residues S106 and Q127 each contribute to the FMN site. A substrate-binding site is contributed by Y129. T155 is an FMN binding site. Substrate is bound at residue R164. K251 contributes to the FMN binding site. H275 (proton acceptor) is an active-site residue. R278 serves as a coordination point for substrate. FMN is bound at residue 306–330; it reads DSGIRTGLDVVRMLALGADTVLLGR.

The protein belongs to the FMN-dependent alpha-hydroxy acid dehydrogenase family. It depends on FMN as a cofactor.

Its subcellular location is the cell inner membrane. The enzyme catalyses (S)-lactate + A = pyruvate + AH2. Catalyzes the conversion of L-lactate to pyruvate. Is coupled to the respiratory chain. The polypeptide is L-lactate dehydrogenase (Stenotrophomonas maltophilia (strain R551-3)).